A 436-amino-acid chain; its full sequence is CaM kinase-like vesicle-associated protein (436 aa).

The 263-residue stretch at 24–286 folds into the Protein kinase domain; the sequence is YDLGQIVKSE…AQEAINHEWI (263 aa). The segment at 328 to 436 is disordered; it reads APENQTAAAT…ALDTVEEQSG (109 aa). The segment covering 333-409 has biased composition (low complexity); the sequence is TAAATAPAAE…QPPAEPVVHV (77 aa).

The protein belongs to the protein kinase superfamily. CAMK Ser/Thr protein kinase family. As to quaternary structure, interacts with calmodulin, in the presence of calcium. Requires Ca(2+) as cofactor.

The protein resides in the cytoplasmic vesicle membrane. Functionally, does not appear to have detectable kinase activity. In Danio rerio (Zebrafish), this protein is CaM kinase-like vesicle-associated protein (camkv).